The primary structure comprises 1755 residues: Gag-Pro-Pol polyprotein (1755 aa).

Residue G2 is the site of N-myristoyl glycine; by host attachment. Basic and acidic residues-rich tracts occupy residues 151–169 (YDEPYEEKEKADKNEEKDH) and 178–191 (QRKENSEGKRKEKD). Residues 151–191 (YDEPYEEKEKADKNEEKDHVRKIKKVVQRKENSEGKRKEKD) are disordered. A PTAP/PSAP motif motif is present at residues 305 to 308 (PSAP). 2 CCHC-type zinc fingers span residues 525 to 542 (PVCFSCGKTGHIRKDCKD) and 552 to 569 (GLCPRCKKGYHWKSECKS). A disordered region spans residues 572–631 (DKDGNPLPPLETNAENSKNLVKGQSPSPAQKGDGVKGSGLNPEAPPFTIHDLPRGTPGSA). The segment covering 584–599 (NAENSKNLVKGQSPSP) has biased composition (polar residues). One can recognise a Peptidase A2 domain in the interval 766-841 (FLGLLDTGAD…LPFTLWGRDI (76 aa)). D771 serves as the catalytic Protease; shared with dimeric partner. One can recognise a Reverse transcriptase domain in the interval 905-1093 (LQLGHLEESN…DNLKYLGTHI (189 aa)). The Mg(2+) site is built by D970, D1045, D1046, D1316, E1346, D1366, and D1429. Positions 1307–1437 (LEKGIVIFTD…ADSLTRILTA (131 aa)) constitute an RNase H type-1 domain. The Integrase-type zinc finger occupies 1436-1477 (TALESAQESHALHHQNAAALRFQFHITREQAREIVKLCPNCP). H1445, H1449, C1473, and C1476 together coordinate Zn(2+). The region spanning 1490-1647 (RGLKPRVLWQ…TAAERHWGPI (158 aa)) is the Integrase catalytic domain. D1501, D1558, and E1594 together coordinate Mg(2+). A DNA-binding region (integrase-type) is located at residues 1653–1702 (PMVMWKDLLTGSWKGPDVLITAGRGYACVFPQDAETPIWVPDRFIRPFTE). A disordered region spans residues 1699–1755 (PFTERKEATPTPGTAEKTPPRDEKDQQESPKNESSPHQREDGLATSAGVDLRSGGGP). A compositionally biased stretch (basic and acidic residues) spans 1716–1740 (TPPRDEKDQQESPKNESSPHQREDG).

The protein belongs to the retroviral Pol polyprotein family. Homodimer; when myristoylated. As to quaternary structure, homodimer. In terms of assembly, homooctamer. Homotrimer. It depends on Mg(2+) as a cofactor. Post-translationally, specific enzymatic cleavages in vivo yield mature proteins. Released by autocatalytic processing. In terms of processing, myristoylated. Myristoylation of the matrix (MA) domain mediates the transport and binding of Gag polyproteins to the host plasma membrane and is required for the assembly of viral particles.

It localises to the virion. The catalysed reaction is DNA(n) + a 2'-deoxyribonucleoside 5'-triphosphate = DNA(n+1) + diphosphate. The enzyme catalyses Endonucleolytic cleavage to 5'-phosphomonoester.. It catalyses the reaction dUTP + H2O = dUMP + diphosphate + H(+). Inhibited by pepstatin A. Matrix protein. In terms of biological role, nucleocapsid protein p14: Binds strongly to viral nucleic acids and promote their aggregation. Also destabilizes the nucleic acids duplexes via highly structured zinc-binding motifs. Functionally, capsid protein. Its function is as follows. NC-dUTPase has dUTPase activity, thereby preventing incorporation of uracil into DNA. The aspartyl protease mediates proteolytic cleavages of Gag and Gag-Pol polyproteins during or shortly after the release of the virion from the plasma membrane. Cleavages take place as an ordered, step-wise cascade to yield mature proteins. This process is called maturation. Displays maximal activity during the budding process just prior to particle release from the cell. In terms of biological role, RT is a multifunctional enzyme that converts the viral dimeric RNA genome into dsDNA in the cytoplasm, shortly after virus entry into the cell. This enzyme displays a DNA polymerase activity that can copy either DNA or RNA templates, and a ribonuclease H (RNase H) activity that cleaves the RNA strand of RNA-DNA heteroduplexes in a partially processive 3' to 5' endonucleasic mode. Conversion of viral genomic RNA into dsDNA requires many steps. A tRNA binds to the primer-binding site (PBS) situated at the 5' end of the viral RNA. RT uses the 3' end of the tRNA primer to perfom a short round of RNA-dependent minus-strand DNA synthesis. The reading proceeds through the U5 region and ends after the repeated (R) region which is present at both ends of viral RNA. The portion of the RNA-DNA heteroduplex is digested by the RNase H, resulting in a ssDNA product attached to the tRNA primer. This ssDNA/tRNA hybridizes with the identical R region situated at the 3' end of viral RNA. This template exchange, known as minus-strand DNA strong stop transfer, can be either intra- or intermolecular. RT uses the 3' end of this newly synthesized short ssDNA to perfom the RNA-dependent minus-strand DNA synthesis of the whole template. RNase H digests the RNA template except for a polypurine tract (PPT) situated at the 5' end of the genome. It is not clear if both polymerase and RNase H activities are simultaneous. RNase H probably can proceed both in a polymerase-dependent (RNA cut into small fragments by the same RT performing DNA synthesis) and a polymerase-independent mode (cleavage of remaining RNA fragments by free RTs). Secondly, RT performs DNA-directed plus-strand DNA synthesis using the PPT that has not been removed by RNase H as primers. PPT and tRNA primers are then removed by RNase H. The 3' and 5' ssDNA PBS regions hybridize to form a circular dsDNA intermediate. Strand displacement synthesis by RT to the PBS and PPT ends produces a blunt ended, linear dsDNA copy of the viral genome that includes long terminal repeats (LTRs) at both ends. Functionally, catalyzes viral DNA integration into the host chromosome, by performing a series of DNA cutting and joining reactions. The chain is Gag-Pro-Pol polyprotein (gag-pro-pol) from Mus musculus (Mouse).